We begin with the raw amino-acid sequence, 166 residues long: UPF0304 protein VP0990 (166 aa).

It belongs to the UPF0304 family.

The sequence is that of UPF0304 protein VP0990 from Vibrio parahaemolyticus serotype O3:K6 (strain RIMD 2210633).